The following is an 864-amino-acid chain: Leucine--tRNA ligase (864 aa).

Residues 42–52 (PYPSGKLHMGH) carry the 'HIGH' region motif. The short motif at 624 to 628 (KMSKS) is the 'KMSKS' region element. Lys627 contacts ATP.

The protein belongs to the class-I aminoacyl-tRNA synthetase family.

The protein resides in the cytoplasm. It carries out the reaction tRNA(Leu) + L-leucine + ATP = L-leucyl-tRNA(Leu) + AMP + diphosphate. The polypeptide is Leucine--tRNA ligase (Burkholderia cenocepacia (strain HI2424)).